Reading from the N-terminus, the 359-residue chain is Heat-inducible transcription repressor HrcA (359 aa).

Belongs to the HrcA family.

In terms of biological role, negative regulator of class I heat shock genes (grpE-dnaK-dnaJ and groELS operons). Prevents heat-shock induction of these operons. The polypeptide is Heat-inducible transcription repressor HrcA (Roseiflexus sp. (strain RS-1)).